We begin with the raw amino-acid sequence, 670 residues long: METEIPRSTEISETLLLPETNLDHGEYVPEWKEQITIRGLISSALLGILFCIITHKLNLTIGIIPSLNVAAGLLGFFFIKSWTGFLSKLGFLSKPFTKQENTVIQTCVVSCYGLAYSGGFGSYLIAMDERTYKLIGSDYPGNNPEDVINPGLWWMTGFLFVVSFLGLFCLVPLRKVMILDYKLTYPSGTATAMLINSFHNNTGAELAGKQVKCLGKYLSLSLVWSCFKWFFSGIGGACGFDHFPTLGLTLFKNTFYFDFSPTFIGCGMICPHLVNCSVLLGAIISWGFLWPFISQHAGDWYPADLKANDFKGLYGYKVFIAISIILGDGLYNLIKIIVVTVKEICNKSSRQHNLPVFTDILDKSKTSVLMREKKKRDIIFLKDRIPLEFAVSGYVGLAAISTAIIPLIFPPLKWYFVLCSYLVAPGLAFCNSYGAGLTDMSMPSTYGKTGLFIVASIVGNNGGVIAGLAACGIMMSIVSTAADLMQDFKTGYLTLSSAKSMFVTQLLGTAMGCIIAPLTFWLFWTAFDIGDPDGLYKAPYAVIYREMAILGVEGFAKLPKHCLALCCGFFIAALIVNLIRDMTPPKISKLIPLPMAMAGPFYIGAYFAIDMFVGTVIMLVWERMNKKDADDYSGAVASGLICGDGIWTIPSAILSILRINPPICMYFRPS.

The next 13 helical transmembrane spans lie at 35–55 (ITIR…IITH), 59–79 (LTIG…FFFI), 107–127 (CVVS…LIAM), 151–171 (GLWW…FCLV), 273–293 (LVNC…WPFI), 318–338 (VFIA…KIIV), 389–409 (FAVS…PLIF), 416–436 (FVLC…YGAG), 450–470 (GLFI…GLAA), 507–527 (LGTA…WTAF), 559–579 (PKHC…VNLI), 601–621 (FYIG…MLVW), and 636–656 (VASG…ILSI).

The protein belongs to the YSL (TC 2.A.67.2) family.

The protein resides in the membrane. Its function is as follows. May be involved in the transport of nicotianamine-chelated metals. The sequence is that of Probable metal-nicotianamine transporter YSL4 (YSL4) from Arabidopsis thaliana (Mouse-ear cress).